Consider the following 252-residue polypeptide: Imidazole glycerol phosphate synthase subunit HisF (252 aa).

Catalysis depends on residues D11 and D130.

It belongs to the HisA/HisF family. Heterodimer of HisH and HisF.

The protein resides in the cytoplasm. The catalysed reaction is 5-[(5-phospho-1-deoxy-D-ribulos-1-ylimino)methylamino]-1-(5-phospho-beta-D-ribosyl)imidazole-4-carboxamide + L-glutamine = D-erythro-1-(imidazol-4-yl)glycerol 3-phosphate + 5-amino-1-(5-phospho-beta-D-ribosyl)imidazole-4-carboxamide + L-glutamate + H(+). It functions in the pathway amino-acid biosynthesis; L-histidine biosynthesis; L-histidine from 5-phospho-alpha-D-ribose 1-diphosphate: step 5/9. In terms of biological role, IGPS catalyzes the conversion of PRFAR and glutamine to IGP, AICAR and glutamate. The HisF subunit catalyzes the cyclization activity that produces IGP and AICAR from PRFAR using the ammonia provided by the HisH subunit. This is Imidazole glycerol phosphate synthase subunit HisF from Dictyoglomus thermophilum (strain ATCC 35947 / DSM 3960 / H-6-12).